The sequence spans 303 residues: Elongation factor Ts (303 aa).

Residues 79-82 (TDFV) form an involved in Mg(2+) ion dislocation from EF-Tu region.

The protein belongs to the EF-Ts family.

The protein localises to the cytoplasm. Associates with the EF-Tu.GDP complex and induces the exchange of GDP to GTP. It remains bound to the aminoacyl-tRNA.EF-Tu.GTP complex up to the GTP hydrolysis stage on the ribosome. The chain is Elongation factor Ts from Syntrophotalea carbinolica (strain DSM 2380 / NBRC 103641 / GraBd1) (Pelobacter carbinolicus).